Consider the following 218-residue polypeptide: Vacuolar protein-sorting-associated protein 37 homolog 2 (218 aa).

A disordered region spans residues 1-51; sequence MFNFWGSKEQQQGQSRPSPEASATPWYSPSLVTSPSSSRPQTSGQIPSHVS. The span at 8-17 shows a compositional bias: polar residues; that stretch reads KEQQQGQSRP. A compositionally biased stretch (low complexity) spans 28 to 40; it reads SPSLVTSPSSSRP. The region spanning 137–218 is the VPS37 C-terminal domain; sequence QEKLNELENQ…HLAAKTSSIG (82 aa).

It belongs to the VPS37 family. As to quaternary structure, component of the endosomal sorting required for transport complex I (ESCRT-I), composed of ELC, VPS28 and VPS37. Interacts with ELC.

Its subcellular location is the endosome. Component of the ESCRT-I complex (endosomal sorting complex required for transport I), a regulator of vesicular trafficking process. Required for the sorting of endocytic ubiquitinated cargos into multivesicular bodies (MVBs). The chain is Vacuolar protein-sorting-associated protein 37 homolog 2 (VPS37-2) from Arabidopsis thaliana (Mouse-ear cress).